A 115-amino-acid polypeptide reads, in one-letter code: Large ribosomal subunit protein bL19 (115 aa).

It belongs to the bacterial ribosomal protein bL19 family.

This protein is located at the 30S-50S ribosomal subunit interface and may play a role in the structure and function of the aminoacyl-tRNA binding site. This Nitrosococcus oceani (strain ATCC 19707 / BCRC 17464 / JCM 30415 / NCIMB 11848 / C-107) protein is Large ribosomal subunit protein bL19.